Consider the following 126-residue polypeptide: Large ribosomal subunit protein eL8 (126 aa).

The protein belongs to the eukaryotic ribosomal protein eL8 family. As to quaternary structure, part of the 50S ribosomal subunit. Probably part of the RNase P complex.

It is found in the cytoplasm. In terms of biological role, multifunctional RNA-binding protein that recognizes the K-turn motif in ribosomal RNA, the RNA component of RNase P, box H/ACA, box C/D and box C'/D' sRNAs. This is Large ribosomal subunit protein eL8 from Cenarchaeum symbiosum (strain A).